The chain runs to 294 residues: Cytidine deaminase (294 aa).

CMP/dCMP-type deaminase domains are found at residues 48 to 168 (DDDA…FGPT) and 187 to 294 (AETD…RVTF). Residue 89-91 (NME) participates in substrate binding. H102 lines the Zn(2+) pocket. Residue E104 is the Proton donor of the active site. Zn(2+)-binding residues include C129 and C132.

It belongs to the cytidine and deoxycytidylate deaminase family. As to quaternary structure, homodimer. It depends on Zn(2+) as a cofactor.

The catalysed reaction is cytidine + H2O + H(+) = uridine + NH4(+). It catalyses the reaction 2'-deoxycytidine + H2O + H(+) = 2'-deoxyuridine + NH4(+). Functionally, this enzyme scavenges exogenous and endogenous cytidine and 2'-deoxycytidine for UMP synthesis. This Yersinia pseudotuberculosis serotype O:1b (strain IP 31758) protein is Cytidine deaminase.